The primary structure comprises 609 residues: NURS complex subunit pir2 (609 aa).

Over residues 1–25 (MSEVHQESEVEYSRWKRERSPERSQ) the composition is skewed to basic and acidic residues. 2 disordered regions span residues 1 to 60 (MSEV…RASG) and 187 to 210 (EKPS…QLSK). The segment covering 27–36 (RSQSPPGEQS) has biased composition (low complexity). Residues Ser28 and Ser30 each carry the phosphoserine modification. A compositionally biased stretch (basic and acidic residues) spans 37–57 (AYHRERSPLRKRGNYYDDRTR). A compositionally biased stretch (polar residues) spans 201-210 (LPSNDPQLSK). Residues 474 to 499 (YRCHVGTCAKLFLGPEFVRKHINKKH) form a C2H2-type zinc finger.

It belongs to the ARS2 family. As to quaternary structure, interacts with ccr4.

The protein localises to the nucleus. This Schizosaccharomyces pombe (strain 972 / ATCC 24843) (Fission yeast) protein is NURS complex subunit pir2.